A 321-amino-acid polypeptide reads, in one-letter code: Phospho-N-acetylmuramoyl-pentapeptide-transferase (321 aa).

10 consecutive transmembrane segments (helical) span residues 1–21 (MIFI…PILI), 50–70 (MGGL…IIFV), 76–96 (IILL…DDYI), 112–132 (FLAQ…FHLV), 140–160 (IPFV…IVFW), 176–196 (GLAT…SYML), 200–220 (AIGI…PYNL), 225–245 (VFMG…ISIM), 250–270 (LSLI…MLQV), and 300–320 (VVTV…WIGV).

The protein belongs to the glycosyltransferase 4 family. MraY subfamily. Mg(2+) serves as cofactor.

Its subcellular location is the cell membrane. The enzyme catalyses UDP-N-acetyl-alpha-D-muramoyl-L-alanyl-gamma-D-glutamyl-L-lysyl-D-alanyl-D-alanine + di-trans,octa-cis-undecaprenyl phosphate = Mur2Ac(oyl-L-Ala-gamma-D-Glu-L-Lys-D-Ala-D-Ala)-di-trans,octa-cis-undecaprenyl diphosphate + UMP. The protein operates within cell wall biogenesis; peptidoglycan biosynthesis. Catalyzes the initial step of the lipid cycle reactions in the biosynthesis of the cell wall peptidoglycan: transfers peptidoglycan precursor phospho-MurNAc-pentapeptide from UDP-MurNAc-pentapeptide onto the lipid carrier undecaprenyl phosphate, yielding undecaprenyl-pyrophosphoryl-MurNAc-pentapeptide, known as lipid I. The protein is Phospho-N-acetylmuramoyl-pentapeptide-transferase of Staphylococcus epidermidis (strain ATCC 12228 / FDA PCI 1200).